A 281-amino-acid polypeptide reads, in one-letter code: Phytanoyl-CoA dioxygenase 1 (281 aa).

2-oxoglutarate is bound by residues Lys-98, Met-137, 152–154 (HQD), and Trp-169. Fe cation contacts are provided by His-152 and Asp-154. Residue His-237 coordinates Fe cation. Residues Ser-239 and Arg-248 each contribute to the 2-oxoglutarate site.

The protein belongs to the PhyH family. The cofactor is Fe cation. L-ascorbate serves as cofactor.

It catalyses the reaction phytanoyl-CoA + 2-oxoglutarate + O2 = 2-hydroxyphytanoyl-CoA + succinate + CO2. It participates in lipid metabolism; fatty acid metabolism. Converts phytanoyl-CoA to 2-hydroxyphytanoyl-CoA. In Oryza sativa subsp. japonica (Rice), this protein is Phytanoyl-CoA dioxygenase 1.